The following is a 219-amino-acid chain: Large ribosomal subunit protein uL16 (219 aa).

It belongs to the universal ribosomal protein uL16 family. Component of the small ribosomal subunit. Mature ribosomes consist of a small (40S) and a large (60S) subunit. The 40S subunit contains about 33 different proteins and 1 molecule of RNA (18S). The 60S subunit contains about 49 different proteins and 3 molecules of RNA (25S, 5.8S and 5S).

The polypeptide is Large ribosomal subunit protein uL16 (RPL10) (Solanum melongena (Eggplant)).